The sequence spans 241 residues: Lipoprotein-releasing system ATP-binding protein LolD 2 (241 aa).

The region spanning 6 to 241 (LDAQQLSKSY…YKSYEKSTAV (236 aa)) is the ABC transporter domain. Residue 43-50 (GASGSGKT) participates in ATP binding.

It belongs to the ABC transporter superfamily. Lipoprotein translocase (TC 3.A.1.125) family. In terms of assembly, the complex is composed of two ATP-binding proteins (LolD) and two transmembrane proteins (LolC and LolE).

The protein localises to the cell inner membrane. Its function is as follows. Part of the ABC transporter complex LolCDE involved in the translocation of mature outer membrane-directed lipoproteins, from the inner membrane to the periplasmic chaperone, LolA. Responsible for the formation of the LolA-lipoprotein complex in an ATP-dependent manner. This chain is Lipoprotein-releasing system ATP-binding protein LolD 2, found in Chlorobium chlorochromatii (strain CaD3).